The sequence spans 569 residues: Urease subunit beta (569 aa).

The Urease domain occupies Gly-131–Phe-569. The Ni(2+) site is built by His-136, His-138, and Lys-219. Lys-219 is subject to N6-carboxylysine. His-221 contacts substrate. His-248 and His-274 together coordinate Ni(2+). Catalysis depends on His-322, which acts as the Proton donor. Asp-362 serves as a coordination point for Ni(2+).

Belongs to the metallo-dependent hydrolases superfamily. Urease alpha subunit family. In terms of assembly, heterohexamer of 3 UreA (alpha) and 3 UreB (beta) subunits. Four heterohexamers assemble to form a 16 nm dodecameric complex. Requires Ni cation as cofactor. Carboxylation allows a single lysine to coordinate two nickel ions.

It is found in the cytoplasm. The enzyme catalyses urea + 2 H2O + H(+) = hydrogencarbonate + 2 NH4(+). It functions in the pathway nitrogen metabolism; urea degradation; CO(2) and NH(3) from urea (urease route): step 1/1. In terms of biological role, ammonia produced by ureolysis increases the gastric pH thereby providing an environment permissive for colonization of the stomach. The protein is Urease subunit beta of Helicobacter pylori (strain J99 / ATCC 700824) (Campylobacter pylori J99).